A 463-amino-acid polypeptide reads, in one-letter code: Steroidogenic factor 1 (463 aa).

The segment at residues 10-85 (DELCPVCGDK…VGMRLEAVRA (76 aa)) is a DNA-binding region (nuclear receptor). The segment at 13–33 (CPVCGDKVSGYHYGLLTCESC) adopts an NR C4-type zinc-finger fold. Lys34, Lys38, and Lys72 each carry N6-acetyllysine. An NR C4-type zinc finger spans residues 49-73 (CTESQNCKIDKTQRKRCPYCRFQKC). Lys119 participates in a covalent cross-link: Glycyl lysine isopeptide (Lys-Gly) (interchain with G-Cter in SUMO). The interval 119–160 (KLETGPSMGPPPQTDYPLAPALHPGAKGLAPAPPAGPPGDYE) is disordered. A compositionally biased stretch (low complexity) spans 135 to 148 (PLAPALHPGAKGLA). Lys193 is covalently cross-linked (Glycyl lysine isopeptide (Lys-Gly) (interchain with G-Cter in SUMO)). Residues 197 to 216 (PEPYASPHEPAPPYGYPEPY) form a disordered region. The residue at position 202 (Ser202) is a Phosphoserine; by CDK7. Pro residues predominate over residues 205–216 (EPAPPYGYPEPY). One can recognise an NR LBD domain in the interval 224–461 (GVPELILKLL…NLLIEMLHAK (238 aa)). Positions 343, 438, and 442 each coordinate a 1,2-diacyl-sn-glycero-3-phosphocholine.

This sequence belongs to the nuclear hormone receptor family. NR5 subfamily. In terms of assembly, binds DNA as a monomer. Part of a complex consisting of SFPQ, NONO and NR5A1. Interacts with NR0B2, NCOA2 and PPARGC1A. Interacts with DGKQ and CDK7. Binds to and activated by HIPK3. Acetylation stimulates the transcriptional activity. Post-translationally, sumoylation reduces CDK7-mediated phosphorylation on Ser-202. In terms of processing, phosphorylated on Ser-202 by CDK7. This phosphorylation promotes transcriptional activity. Expressed in the pre-granulosa and Sertoli cells of the ovary and testis, respectively. In the testis it is also present in the interstitial cells. In the adult ovary it is expressed in the interstitial gland, and in the granulosa cells and theca interna of small to medium-sized antral follicles, but is not expressed in large antral follicles.

It is found in the nucleus. Functionally, transcriptional activator. Seems to be essential for sexual differentiation and formation of the primary steroidogenic tissues. Binds to the Ad4 site found in the promoter region of steroidogenic P450 genes such as CYP11A, CYP11B and CYP21B. Also regulates the AMH/Muellerian inhibiting substance gene as well as the AHCH and STAR genes. 5'-YCAAGGYC-3' and 5'-RRAGGTCA-3' are the consensus sequences for the recognition by NR5A1. The SFPQ-NONO-NR5A1 complex binds to the CYP17 promoter and regulates basal and cAMP-dependent transcriptional activity. Binds phosphatidylcholine and phospholipids with a phosphatidylinositol (PI) headgroup, in particular PI(3,4)P2 and PI(3,4,5)P3. Activated by the phosphorylation of NR5A1 by HIPK3 leading to increased steroidogenic gene expression upon cAMP signaling pathway stimulation. This is Steroidogenic factor 1 (NR5A1) from Notamacropus eugenii (Tammar wallaby).